The chain runs to 544 residues: Phosphoenolpyruvate carboxykinase (ATP) (544 aa).

246–253 (GLSGTGKT) is a binding site for ATP.

Belongs to the phosphoenolpyruvate carboxykinase (ATP) family.

It catalyses the reaction oxaloacetate + ATP = phosphoenolpyruvate + ADP + CO2. The protein operates within carbohydrate biosynthesis; gluconeogenesis. The polypeptide is Phosphoenolpyruvate carboxykinase (ATP) (PCK1) (Candida glabrata (strain ATCC 2001 / BCRC 20586 / JCM 3761 / NBRC 0622 / NRRL Y-65 / CBS 138) (Yeast)).